A 151-amino-acid polypeptide reads, in one-letter code: D-aminoacyl-tRNA deacylase (151 aa).

The short motif at G136–P137 is the Gly-cisPro motif, important for rejection of L-amino acids element.

This sequence belongs to the DTD family. Homodimer.

The protein resides in the cytoplasm. It carries out the reaction glycyl-tRNA(Ala) + H2O = tRNA(Ala) + glycine + H(+). The enzyme catalyses a D-aminoacyl-tRNA + H2O = a tRNA + a D-alpha-amino acid + H(+). Its function is as follows. An aminoacyl-tRNA editing enzyme that deacylates mischarged D-aminoacyl-tRNAs. Also deacylates mischarged glycyl-tRNA(Ala), protecting cells against glycine mischarging by AlaRS. Acts via tRNA-based rather than protein-based catalysis; rejects L-amino acids rather than detecting D-amino acids in the active site. By recycling D-aminoacyl-tRNA to D-amino acids and free tRNA molecules, this enzyme counteracts the toxicity associated with the formation of D-aminoacyl-tRNA entities in vivo and helps enforce protein L-homochirality. In Lactococcus lactis subsp. cremoris (strain SK11), this protein is D-aminoacyl-tRNA deacylase.